We begin with the raw amino-acid sequence, 234 residues long: uncharacterized protein (234 aa).

Residues 212–234 (GKHLKLDSNTTENKTTKQNETGG) form a disordered region. A compositionally biased stretch (low complexity) spans 220 to 234 (NTTENKTTKQNETGG).

This is an uncharacterized protein from Methanothermobacter thermautotrophicus (Methanobacterium thermoformicicum).